Consider the following 295-residue polypeptide: uncharacterized protein (295 aa).

The HTH araC/xylS-type domain occupies 8–106 (QKTINWIESH…HMPPGAYRTF (99 aa)). The segment at residues 25-46 (EDIVNVSSFSKFHFHRIFQKEV) is a DNA-binding region (H-T-H motif).

Functionally, probable transcriptional regulator. This is an uncharacterized protein from Bacillus subtilis (strain 168).